A 172-amino-acid polypeptide reads, in one-letter code: Large ribosomal subunit protein uL10 (172 aa).

The protein belongs to the universal ribosomal protein uL10 family. As to quaternary structure, part of the ribosomal stalk of the 50S ribosomal subunit. The N-terminus interacts with L11 and the large rRNA to form the base of the stalk. The C-terminus forms an elongated spine to which L12 dimers bind in a sequential fashion forming a multimeric L10(L12)X complex.

Forms part of the ribosomal stalk, playing a central role in the interaction of the ribosome with GTP-bound translation factors. The chain is Large ribosomal subunit protein uL10 from Caulobacter sp. (strain K31).